Here is a 61-residue protein sequence, read N- to C-terminus: Small ribosomal subunit protein uS14 (61 aa).

4 residues coordinate Zn(2+): cysteine 24, cysteine 27, cysteine 40, and cysteine 43.

This sequence belongs to the universal ribosomal protein uS14 family. Zinc-binding uS14 subfamily. Part of the 30S ribosomal subunit. Contacts proteins S3 and S10. The cofactor is Zn(2+).

Binds 16S rRNA, required for the assembly of 30S particles and may also be responsible for determining the conformation of the 16S rRNA at the A site. The polypeptide is Small ribosomal subunit protein uS14 (Streptococcus thermophilus (strain ATCC BAA-491 / LMD-9)).